The sequence spans 91 residues: Dynein light chain 1, cytoplasmic (91 aa).

This sequence belongs to the dynein light chain family. In terms of assembly, homodimer. Cytoplasmic dynein consists of two catalytic heavy chains (HCs) and a number of non-catalytic subunits which present intermediate chains (ICs), light intermediate chains (LICs) and light chains (LCs). Component of the nuclear pore complex (NPC). NPC constitutes the exclusive means of nucleocytoplasmic transport. NPCs allow the passive diffusion of ions and small molecules and the active, nuclear transport receptor-mediated bidirectional transport of macromolecules such as proteins, RNAs, ribonucleoparticles (RNPs), and ribosomal subunits across the nuclear envelope. Due to its 8-fold rotational symmetry, all subunits are present with 8 copies or multiples thereof.

The protein resides in the cytoplasm. Its subcellular location is the cytoskeleton. It is found in the nucleus. It localises to the nuclear pore complex. Functionally, acts as one of several non-catalytic accessory components of the cytoplasmic dynein complex that are thought to be involved in linking dynein to cargos and to adapter proteins that regulate dynein function. Cytoplasmic dynein 1 acts as a motor for the intracellular retrograde motility of vesicles and organelles along microtubules. May play a role in changing or maintaining the spatial distribution of cytoskeletal structures. Also a component of the nuclear pore complex. This Debaryomyces hansenii (strain ATCC 36239 / CBS 767 / BCRC 21394 / JCM 1990 / NBRC 0083 / IGC 2968) (Yeast) protein is Dynein light chain 1, cytoplasmic (DYN2).